We begin with the raw amino-acid sequence, 233 residues long: MSDNLTELSQQLHDASEKKQLTAIAALAEMGEGGQGILLDYLAKNVPLEKPVLAVGNVYQTLRNLEQETITTQLQRNYPTGIFPLQSAQGIDYLPLQEALGSQDFETADEITRDKLCELAGPGASQRQWLYFTEVEKFPALDLHTINALWWLHSNGNFGFSVQRRLWLASGKEFTKLWPKIGWKSGNVWTRWPKGFTWDLSAPQGHLPLLNQLRGVRVAESLYRHPVWSQYGW.

The protein belongs to the ycf53 family.

This is Ycf53-like protein from Synechocystis sp. (strain ATCC 27184 / PCC 6803 / Kazusa).